The following is a 78-amino-acid chain: Large ribosomal subunit protein bL28 (78 aa).

The segment at 1 to 21 (MSRVCQVTGKKPMVGNNRSHA) is disordered.

Belongs to the bacterial ribosomal protein bL28 family.

The protein is Large ribosomal subunit protein bL28 of Shewanella woodyi (strain ATCC 51908 / MS32).